A 134-amino-acid polypeptide reads, in one-letter code: Acyl carrier protein, chloroplastic (134 aa).

The transit peptide at 1–51 (MATTFSASVSMQATSLATTTRISFQKPVLVSNHGRTNLSFNLSRTRLSISC) directs the protein to the chloroplast. The region spanning 55–130 (QETVEKVSEI…QAAELIEELM (76 aa)) is the Carrier domain. Ser-90 carries the post-translational modification O-(pantetheine 4'-phosphoryl)serine.

This sequence belongs to the acyl carrier protein (ACP) family. 4'-phosphopantetheine is transferred from CoA to a specific serine of apo-ACP by acpS. This modification is essential for activity because fatty acids are bound in thioester linkage to the sulfhydryl of the prosthetic group. Seed.

It is found in the plastid. Its subcellular location is the chloroplast. The protein operates within lipid metabolism; fatty acid biosynthesis. Its function is as follows. Carrier of the growing fatty acid chain in fatty acid biosynthesis. This chain is Acyl carrier protein, chloroplastic (ACL1.C1), found in Brassica napus (Rape).